Consider the following 198-residue polypeptide: Na(+)-translocating NADH-quinone reductase subunit E (198 aa).

Transmembrane regions (helical) follow at residues 11–31, 35–55, 77–97, 110–130, 140–160, and 176–196; these read AVFI…FLAV, VSTA…AVPV, FLNF…LEMV, GIFL…SFMV, IVYG…LAGL, and LGIT…FSGI.

The protein belongs to the NqrDE/RnfAE family. Composed of six subunits; NqrA, NqrB, NqrC, NqrD, NqrE and NqrF.

Its subcellular location is the cell inner membrane. It carries out the reaction a ubiquinone + n Na(+)(in) + NADH + H(+) = a ubiquinol + n Na(+)(out) + NAD(+). In terms of biological role, NQR complex catalyzes the reduction of ubiquinone-1 to ubiquinol by two successive reactions, coupled with the transport of Na(+) ions from the cytoplasm to the periplasm. NqrA to NqrE are probably involved in the second step, the conversion of ubisemiquinone to ubiquinol. The chain is Na(+)-translocating NADH-quinone reductase subunit E from Haemophilus influenzae (strain 86-028NP).